We begin with the raw amino-acid sequence, 654 residues long: Coiled-coil domain-containing protein 81 (654 aa).

The tract at residues 196–270 (SRESYRKRPN…RERQSISPAK (75 aa)) is disordered. Ser206 is subject to Phosphoserine. Basic and acidic residues-rich tracts occupy residues 212-222 (RIEHKETENKT) and 232-251 (GENR…EGGA). Phosphoserine is present on residues Ser273, Ser275, Ser296, and Ser419. Polar residues predominate over residues 293-302 (ENLSSPGCQR). Residues 293-318 (ENLSSPGCQRNDNERPRTSPAPACQD) are disordered. The stretch at 431 to 562 (SQSLLKQMES…QRRDLQMLQR (132 aa)) forms a coiled coil.

Its subcellular location is the cytoplasm. It localises to the cytoskeleton. The protein localises to the microtubule organizing center. It is found in the centrosome. The chain is Coiled-coil domain-containing protein 81 (Ccdc81) from Mus musculus (Mouse).